We begin with the raw amino-acid sequence, 383 residues long: Acetylornithine deacetylase (383 aa).

Position 80 (His80) interacts with Zn(2+). The active site involves Asp82. Asp112 is a binding site for Zn(2+). The active site involves Glu144. The Zn(2+) site is built by Glu145, Glu169, and His355.

This sequence belongs to the peptidase M20A family. ArgE subfamily. In terms of assembly, homodimer. Zn(2+) serves as cofactor. Co(2+) is required as a cofactor. Requires glutathione as cofactor.

It is found in the cytoplasm. It carries out the reaction N(2)-acetyl-L-ornithine + H2O = L-ornithine + acetate. The protein operates within amino-acid biosynthesis; L-arginine biosynthesis; L-ornithine from N(2)-acetyl-L-ornithine (linear): step 1/1. In terms of biological role, catalyzes the hydrolysis of the amide bond of N(2)-acetylated L-amino acids. Cleaves the acetyl group from N-acetyl-L-ornithine to form L-ornithine, an intermediate in L-arginine biosynthesis pathway, and a branchpoint in the synthesis of polyamines. This Salmonella typhimurium (strain LT2 / SGSC1412 / ATCC 700720) protein is Acetylornithine deacetylase.